A 488-amino-acid chain; its full sequence is Ribulose bisphosphate carboxylase large chain (488 aa).

Substrate contacts are provided by Asn127 and Thr177. Residue Lys179 is the Proton acceptor of the active site. Lys181 contributes to the substrate binding site. Mg(2+) is bound by residues Lys205, Asp207, and Glu208. Lys205 carries the post-translational modification N6-carboxylysine. The active-site Proton acceptor is the His297. Residues Arg298, His330, and Ser382 each coordinate substrate.

It belongs to the RuBisCO large chain family. Type I subfamily. As to quaternary structure, heterohexadecamer of 8 large chains and 8 small chains. Mg(2+) is required as a cofactor.

It localises to the plastid. Its subcellular location is the chloroplast. It carries out the reaction 2 (2R)-3-phosphoglycerate + 2 H(+) = D-ribulose 1,5-bisphosphate + CO2 + H2O. The catalysed reaction is D-ribulose 1,5-bisphosphate + O2 = 2-phosphoglycolate + (2R)-3-phosphoglycerate + 2 H(+). RuBisCO catalyzes two reactions: the carboxylation of D-ribulose 1,5-bisphosphate, the primary event in carbon dioxide fixation, as well as the oxidative fragmentation of the pentose substrate in the photorespiration process. Both reactions occur simultaneously and in competition at the same active site. This Pyropia haitanensis (Red seaweed) protein is Ribulose bisphosphate carboxylase large chain (rbcL).